A 3014-amino-acid chain; its full sequence is Genome polyprotein (3014 aa).

Ser-2 is modified (N-acetylserine; by host). Residues 2–23 are interaction with STAT1; that stretch reads STNPKPQRKTKRNTNRRPQDVK. Residues 2–58 form an interaction with EIF2AK2/PKR region; the sequence is STNPKPQRKTKRNTNRRPQDVKFPGGGQIVGGVYLLPRRGPRLGVRATRKTSERSQP. The interaction with DDX3X stretch occupies residues 2 to 59; the sequence is STNPKPQRKTKRNTNRRPQDVKFPGGGQIVGGVYLLPRRGPRLGVRATRKTSERSQPR. The tract at residues 2–75 is disordered; sequence STNPKPQRKT…PKARQPTGRS (74 aa). Over 2-168 the chain is Cytoplasmic; the sequence is STNPKPQRKT…EDGVNYATGN (167 aa). Short sequence motifs (nuclear localization signal) lie at residues 5–13 and 38–43; these read PKPQRKTKR and PRRGPR. The segment covering 7-16 has biased composition (basic residues); sequence PQRKTKRNTN. Residues 32-47 show a composition bias toward low complexity; sequence GGVYLLPRRGPRLGVR. Position 53 is a phosphoserine; by host (Ser-53). 2 consecutive short sequence motifs (nuclear localization signal) follow at residues 58–64 and 66–71; these read PRGRRQP and PKARQP. Residues Ser-99 and Ser-116 each carry the phosphoserine; by host modification. The segment at 112 to 152 is important for endoplasmic reticulum and mitochondrial localization; that stretch reads PRRKSRNLGKVIDTLTCGFADLMGYIPLVGGPVGGVARALA. Positions 122 to 173 are interaction with APOA2; it reads VIDTLTCGFADLMGYIPLVGGPVGGVARALAHGVRVLEDGVNYATGNLPGCS. Residues 164 to 167 form an important for lipid droplets localization region; the sequence is YATG. Residues 169–189 traverse the membrane as a helical segment; sequence LPGCSFSIFILALLSCLTVPT. Residues 178–191 constitute a propeptide, ER anchor for the core protein, removed in mature form by host signal peptidase; that stretch reads ILALLSCLTVPTSA. At 190-358 the chain is on the lumenal side; sequence SAVPYRNASG…AGAHWGVLFA (169 aa). N-linked (GlcNAc...) asparagine; by host glycosylation is found at Asn-196, Asn-209, and Asn-234. Positions 265 to 296 are important for fusion; sequence LAGGAALCSALYVGDACGAVFLVGQMFTYSPR. An N-linked (GlcNAc...) asparagine; by host glycan is attached at Asn-305. A helical transmembrane segment spans residues 359-379; sequence AAYYASAANWAKVVLVLFLFA. Topologically, residues 380 to 726 are lumenal; that stretch reads GVDANTRTVG…WEYIVLAFLL (347 aa). The segment at 385–412 is HVR1; the sequence is TRTVGGSAAQGARGLASLFTPGPQQNLQ. Asn-417, Asn-423, and Asn-430 each carry an N-linked (GlcNAc...) (high mannose) asparagine; by host glycan. Intrachain disulfides connect Cys-429-Cys-553, Cys-452-Cys-459, Cys-487-Cys-495, and Cys-504-Cys-509. Asn-448 is a glycosylation site (N-linked (GlcNAc...) asparagine; by host). Residues 475 to 479 form an HVR2 region; that stretch reads AAVSG. The tract at residues 481–494 is CD81-binding 1; the sequence is SDDKPYCWHYPPRP. Residue Asn-533 is glycosylated (N-linked (GlcNAc...) asparagine; by host). The tract at residues 545 to 552 is CD81-binding 2; it reads PPTGNWFG. The N-linked (GlcNAc...) asparagine; by host glycan is linked to Asn-557. Residues Cys-565 and Cys-570 are joined by a disulfide bond. Asn-578 carries an N-linked (GlcNAc...) asparagine; by host glycan. Intrachain disulfides connect Cys-582/Cys-586, Cys-598/Cys-621, and Cys-608/Cys-645. N-linked (GlcNAc...) (high mannose) asparagine; by host glycosylation is found at Asn-624 and Asn-646. An intrachain disulfide couples Cys-653 to Cys-678. The interval 661 to 672 is PKR/eIF2-alpha phosphorylation homology domain (PePHD); the sequence is AELSPLLHTTTQ. The helical transmembrane segment at 727-747 threads the bilayer; the sequence is LADARICTCLWIMLLVCQAEA. The Lumenal portion of the chain corresponds to 748 to 758; sequence ALENVIVLNAA. The chain crosses the membrane as a helical span at residues 759-779; it reads AAAGTHGFFWGLLVICFAWHF. Topologically, residues 780 to 783 are cytoplasmic; the sequence is KGRL. Residues 784-804 form a helical membrane-spanning segment; the sequence is VPGATYLCLGIWPLLLLLFLL. The Lumenal portion of the chain corresponds to 805–814; that stretch reads PQRALALDSS. Residues 815 to 835 traverse the membrane as a helical segment; it reads DGGTVGCLVLTILTIFTLTPG. Residues 836–882 lie on the Cytoplasmic side of the membrane; the sequence is YKKMVVLVIWWLQYFIARVEAFIHVWVPPLQVRGGRDAIIMLTCLFH. The helical transmembrane segment at 883–903 threads the bilayer; the sequence is PALGFEVTKILLGILGPLYLL. Topologically, residues 904 to 929 are lumenal; that stretch reads QYSLIKLPYFIRARALLRACLLAKHL. Positions 904 to 1027 constitute a Peptidase C18 domain; sequence QYSLIKLPYF…DIREAGWRLL (124 aa). Positions 905-1207 are protease NS2-3; it reads YSLIKLPYFI…PVENLETTMR (303 aa). A lipid anchor (S-palmitoyl cysteine; by host) is attached at Cys-923. Residues 930–950 traverse the membrane as a helical segment; sequence ACGRYVQAALLHLGRLTGTYI. Residues 930–950 are interaction with host SCPS1; the sequence is ACGRYVQAALLHLGRLTGTYI. Topologically, residues 951 to 1658 are cytoplasmic; sequence YDHLAPMKDW…CMSADLEVIT (708 aa). Active-site for protease NS2 activity; shared with dimeric partner residues include His-953, Glu-973, and Cys-994. Positions 1028-1209 constitute a Peptidase S29 domain; that stretch reads APITAYAQQT…ENLETTMRSP (182 aa). Catalysis depends on charge relay system; for serine protease NS3 activity residues His-1084 and Asp-1108. The Zn(2+) site is built by Cys-1124 and Cys-1126. Ser-1166 functions as the Charge relay system; for serine protease NS3 activity in the catalytic mechanism. Residues Cys-1172 and His-1176 each contribute to the Zn(2+) site. One can recognise a Helicase ATP-binding domain in the interval 1218 to 1370; sequence PAVPHEFQVG…PNIEEVALPS (153 aa). Residue 1231–1238 participates in ATP binding; sequence APTGSGKS. Residues Ser-1238 and Glu-1318 each contribute to the Mg(2+) site. Residues 1317 to 1320 carry the DECH box motif; the sequence is DECH. The tract at residues 1487-1499 is RNA-binding; the sequence is QRRGRTGRGRHGI. The chain crosses the membrane as a helical span at residues 1659 to 1679; the sequence is STWVLVGGVVAALAAYCLTVG. An NS3-binding region spans residues 1680-1691; that stretch reads SVAIVGRIILSG. Over 1680-1806 the chain is Cytoplasmic; it reads SVAIVGRIIL…AVTSPLTTQQ (127 aa). A helical membrane pass occupies residues 1807–1827; that stretch reads TLLFNILGGWVASQIAPPTAA. Residues 1828-1829 lie on the Lumenal side of the membrane; it reads TA. A helical transmembrane segment spans residues 1830–1850; the sequence is FVVSGMAGAAVGSIGLGRVLI. Asp-1851 is a topological domain (cytoplasmic). Residues 1852–1872 form a helical membrane-spanning segment; sequence ILAGYGAGVAGALVAFKIMCG. Residues 1873-1882 lie on the Lumenal side of the membrane; the sequence is EKPTAEDLVN. A helical membrane pass occupies residues 1883 to 1903; that stretch reads LLPSILCPGALVVGVICAAVL. At 1904–1973 the chain is on the cytoplasmic side; the sequence is RRHIGPGEGA…WIGEDYSTPC (70 aa). The S-palmitoyl cysteine; by host moiety is linked to residue Cys-1973. Residues 1974–2003 lie within the membrane without spanning it; it reads DGTWLRAIWDWVCTALTDFKAWLQAKLLPQ. Residues 2004–2993 lie on the Cytoplasmic side of the membrane; the sequence is LPGVPFLSCQ…YHSMSRARPR (990 aa). Positions 2012, 2030, 2032, and 2053 each coordinate Zn(2+). The interval 2121-2209 is FKBP8-binding; it reads EFFTELDGVR…ASSSASQLSA (89 aa). Residues 2121–2334 are transcriptional activation; it reads EFFTELDGVR…VPPPRRKRKP (214 aa). Residues 2136 to 2140 form an interaction with non-structural protein 4A region; that stretch reads PPCNP. 3 disordered regions span residues 2187 to 2219, 2301 to 2337, and 2358 to 2413; these read AKRR…CTTQ, TWKQ…PVVL, and TQSI…SWST. The interaction with host SKP2 stretch occupies residues 2190–2441; the sequence is RLDRGSPPSL…ALITPCSAEE (252 aa). A phosphoserine; by host mark is found at Ser-2195, Ser-2198, Ser-2202, Ser-2205, Ser-2208, and Ser-2211. Residues 2195–2212 show a composition bias toward low complexity; that stretch reads SPPSLASSSASQLSAPSL. The tract at residues 2211 to 2250 is ISDR; the sequence is SLKATCTTQGHHPDADLIEANLLWRQCMGGNITRVEAENK. The interaction with EIF2AK2/PKR stretch occupies residues 2211 to 2276; that stretch reads SLKATCTTQG…REISVSADCF (66 aa). Residues 2250 to 2307 are NS4B-binding; the sequence is KVVILDSFEPLKADDDDREISVSADCFRRGPAFPPALPIWARPGYDPPLLETWKQPDY. The V3 stretch occupies residues 2300 to 2378; sequence ETWKQPDYDP…GTSSQPDSGP (79 aa). The segment covering 2316 to 2327 has biased composition (pro residues); sequence PLPPAGLPPVPP. The SH3-binding motif lies at 2323–2326; that stretch reads PPVP. The short motif at 2328-2337 is the Nuclear localization signal element; sequence PRRKRKPVVL. The span at 2358–2375 shows a compositional bias: polar residues; it reads TQSIEGQDSAVGTSSQPD. Residue Ser-2465 is modified to Phosphoserine; by host. In terms of domain architecture, RdRp catalytic spans 2637-2755; it reads PMAFSYDTRC…ICESQGTHED (119 aa). Mg(2+)-binding residues include Asp-2643, Asp-2741, and Asp-2742. A helical membrane pass occupies residues 2994 to 3014; that stretch reads CILLCLLLLTVGVGIFLLPAR.

The protein belongs to the hepacivirus polyprotein family. In terms of assembly, homooligomer. Interacts with E1 (via C-terminus). Interacts with the non-structural protein 5A. Interacts (via N-terminus) with host STAT1 (via SH2 domain); this interaction results in decreased STAT1 phosphorylation and ubiquitin-mediated proteasome-dependent STAT1 degradation, leading to decreased IFN-stimulated gene transcription. Interacts with host STAT3; this interaction constitutively activates STAT3. Interacts with host LTBR receptor. Interacts with host TNFRSF1A receptor and possibly induces apoptosis. Interacts with host HNRPK. Interacts with host YWHAE. Interacts with host UBE3A/E6AP. Interacts with host DDX3X. Interacts with host APOA2. Interacts with host RXRA protein. Interacts with host SP110 isoform 3/Sp110b; this interaction sequesters the transcriptional corepressor SP110 away from the nucleus. Interacts with host CREB3 nuclear transcription protein; this interaction triggers cell transformation. Interacts with host ACY3. Interacts with host C1QR1. Interacts with host RBM24; this interaction, which enhances the interaction of the mature core protein with 5'-UTR, may inhibit viral translation and favor replication. Interacts with host EIF2AK2/PKR; this interaction induces the autophosphorylation of EIF2AK2. Part of the viral assembly initiation complex composed of NS2, E1, E2, NS3, NS4A, NS5A and the mature core protein. Forms a heterodimer with envelope glycoprotein E2. Interacts with mature core protein. Interacts with protease NS2. The heterodimer E1/E2 interacts with host CLDN1; this interaction plays a role in viral entry into host cell. Interacts with host SPSB2 (via C-terminus). Part of the viral assembly initiation complex composed of NS2, E1, E2, NS3, NS4A, NS5A and the mature core protein. Interacts with host NEURL3; this interaction prevents E1 binding to glycoprotein E2. As to quaternary structure, forms a heterodimer with envelope glycoprotein E1. Interacts with host CD81 and SCARB1 receptors; these interactions play a role in viral entry into host cell. Interacts with host EIF2AK2/PKR; this interaction inhibits EIF2AK2 and probably allows the virus to evade the innate immune response. Interacts with host CD209/DC-SIGN and CLEC4M/DC-SIGNR. Interact with host SPCS1; this interaction is essential for viral particle assembly. Interacts with protease NS2. The heterodimer E1/E2 interacts with host CLDN1; this interaction plays a role in viral entry into host cell. Part of the viral assembly initiation complex composed of NS2, E1, E2, NS3, NS4A, NS5A and the mature core protein. Interacts with host SLC3A2/4F2hc; the interaction may facilitate viral entry into host cell. Interacts with human PLSCR1. In terms of assembly, homohexamer. Homoheptamer. Interacts with protease NS2. Homodimer. Interacts with host SPCS1; this interaction is essential for viral particle assembly. Interacts with envelope glycoprotein E1. Interacts with envelope glycoprotein E2. Interacts with viroporin p7. Interacts with serine protease/helicase NS3. Part of the replication complex composed of NS2, NS3, NS4A, NS4B, NS5A and the RNA-directed RNA polymerase embedded in an ER-derived membranous web. Part of the viral assembly initiation complex composed of NS2, E1, E2, NS3, NS4A, NS5A and the mature core protein. As to quaternary structure, interacts with protease NS2. Interacts with non-structural protein 4A; this interaction stabilizes the folding of NS3 serine protease. NS3-NS4A interaction is essential for NS3 activation and allows membrane anchorage of the latter. NS3/NS4A complex also prevents phosphorylation of host IRF3, thus preventing the establishment of dsRNA induced antiviral state. Interacts with host MAVS; this interaction leads to the cleavage and inhibition of host MAVS. Interacts with host TICAM1; this interaction leads to the cleavage and inhibition of host TICAM1. Interacts with host TANK-binding kinase/TBK1; this interaction results in the inhibition of the association between TBK1 and IRF3, which leads to the inhibition of IRF3 activation. Interacts with host RBM24. Part of the replication complex composed of NS2, NS3, NS4A, NS4B, NS5A and the RNA-directed RNA polymerase embedded in an ER-derived membranous web. Part of the viral assembly initiation complex composed of NS2, E1, E2, NS3, NS4A, NS5A and the mature core protein. In terms of assembly, interacts with NS3 serine protease; this interaction stabilizes the folding of NS3 serine protease. NS3-NS4A interaction is essential for NS3 activation and allows membrane anchorage of the latter. Interacts with non-structural protein 5A (via N-terminus). Part of the replication complex composed of NS2, NS3, NS4A, NS4B, NS5A and the RNA-directed RNA polymerase embedded in an ER-derived membranous web. Part of the viral assembly initiation complex composed of NS2, E1, E2, NS3, NS4A, NS5A and the mature core protein. Homomultimer. Interacts with non-structural protein NS5A. Interacts with host PLA2G4C; this interaction likely initiates the recruitment of replication complexes to lipid droplets. Interacts with host STING; this interaction disrupts the interaction between STING and TBK1 thereby suppressing the interferon signaling. Part of the replication complex composed of NS2, NS3, NS4A, NS4B, NS5A and the RNA-directed RNA polymerase embedded in an ER-derived membranous web. As to quaternary structure, monomer. Homodimer; dimerization is required for RNA-binding. Interacts with the mature core protein. Interacts (via N-terminus) with non-structural protein 4A. Interacts with non-structural protein 4B. Interacts (via region D2) with RNA-directed RNA polymerase. Part of the viral assembly initiation complex composed of NS2, E1, E2, NS3, NS4A, NS5A and the mature core protein. Part of the replication complex composed of NS2, NS3, NS4A, NS4B, NS5A and the RNA-directed RNA polymerase embedded in an ER-derived membranous web. Interacts with host GRB2. Interacts with host BIN1. Interacts with host PIK3R1. Interacts with host SRCAP. Interacts with host FKBP8. Interacts (via C-terminus) with host VAPB (via MSP domain). Interacts with host EIF2AK2/PKR; this interaction leads to disruption of EIF2AK2 dimerization by NS5A and probably allows the virus to evade the innate immune response. Interacts (via N-terminus) with host PACSIN2 (via N-terminus); this interaction attenuates protein kinase C alpha-mediated phosphorylation of PACSIN2 by disrupting the interaction between PACSIN2 and PRKCA. Interacts (via N-terminus) with host SRC kinase (via SH2 domain). Interacts with most Src-family kinases. Interacts with host IFI27 and SKP2; promotes the ubiquitin-mediated proteasomal degradation of NS5A. Interacts with host GPS2. Interacts with host TNFRSF21; this interaction allows the modulation by the virus of JNK, p38 MAPK, STAT3, and Akt signaling pathways in a DR6-dependent manner. Interacts (via N-terminus) with host CIDEB (via N-terminus); this interaction seems to regulate the association of HCV particles with APOE. Interacts with host CHKA/Choline Kinase-alpha; CHKA bridges host PI4KA and NS5A and potentiates NS5A-stimulated PI4KA activity, which then facilitates the targeting of the ternary complex to the ER for viral replication. Interacts with host SPSB2 (via C-terminus); this interaction targets NS5A for ubiquitination and degradation. Interacts with host RAB18; this interaction may promote the association of NS5A and other replicase components with lipid droplets. Interacts (via region D2) with host PPIA/CYPA; the interaction stimulates RNA-binding ability of NS5A and is dependent on the peptidyl-prolyl cis-trans isomerase activity of PPIA/CYPA. Interacts with host TRIM14; this interaction induces the degradation of NS5A. In terms of assembly, homooligomer. Interacts with non-structural protein 5A. Interacts with host VAPB. Interacts with host PRK2/PKN2. Interacts with host HNRNPA1 and SEPT6; these interactions facilitate viral replication. Part of the replication complex composed of NS2, NS3, NS4A, NS4B, NS5A and the RNA-directed RNA polymerase. The cofactor is Zn(2+). Mg(2+) is required as a cofactor. In terms of processing, specific enzymatic cleavages in vivo yield mature proteins. The structural proteins, core, E1, E2 and p7 are produced by proteolytic processing by host signal peptidases. The core protein precursor is synthesized as a 23 kDa, which is retained in the ER membrane through the hydrophobic signal peptide. Cleavage by the signal peptidase releases the 21 kDa mature core protein. The cleavage of the core protein precursor occurs between aminoacids 176 and 188 but the exact cleavage site is not known. Some degraded forms of the core protein appear as well during the course of infection. The other proteins (p7, NS2, NS3, NS4A, NS4B, NS5A and NS5B) are cleaved by the viral proteases. Autoprocessing between NS2 and NS3 is mediated by the NS2 cysteine protease catalytic domain and regulated by the NS3 N-terminal domain. Post-translationally, phosphorylated by host PKC and PKA. Ubiquitinated; mediated by UBE3A and leading to core protein subsequent proteasomal degradation. In terms of processing, highly N-glycosylated. Post-translationally, palmitoylation is required for NS2/3 autoprocessing and E2 recruitment to membranes. Palmitoylated. This modification may play a role in its polymerization or in protein-protein interactions. In terms of processing, phosphorylated on serines in a basal form termed p56. p58 is a hyperphosphorylated form of p56. p56 and p58 coexist in the cell in roughly equivalent amounts. Hyperphosphorylation is dependent on the presence of NS4A. Host CSNK1A1/CKI-alpha or RPS6KB1 kinases may be responsible for NS5A phosphorylation. Post-translationally, tyrosine phosphorylation is essential for the interaction with host SRC. The N-terminus is phosphorylated by host PRK2/PKN2.

The protein localises to the host endoplasmic reticulum membrane. It localises to the host mitochondrion membrane. It is found in the virion. The protein resides in the host cytoplasm. Its subcellular location is the host nucleus. The protein localises to the host lipid droplet. It localises to the virion membrane. It is found in the host mitochondrion. The protein resides in the host cell membrane. Its subcellular location is the host perinuclear region. The catalysed reaction is Hydrolysis of four peptide bonds in the viral precursor polyprotein, commonly with Asp or Glu in the P6 position, Cys or Thr in P1 and Ser or Ala in P1'.. The enzyme catalyses a ribonucleoside 5'-triphosphate + H2O = a ribonucleoside 5'-diphosphate + phosphate + H(+). It carries out the reaction ATP + H2O = ADP + phosphate + H(+). It catalyses the reaction RNA(n) + a ribonucleoside 5'-triphosphate = RNA(n+1) + diphosphate. Inhibited by the antiviral drug hexamethylene amiloride. Inhibition by amantadine appears to be genotype-dependent. Also inhibited by long-alkyl-chain iminosugar derivatives. Its activity is regulated as follows. Activity is up-regulated by PRK2/PKN2-mediated phosphorylation. Packages viral RNA to form a viral nucleocapsid, and promotes virion budding. Participates in the viral particle production as a result of its interaction with the non-structural protein 5A. Binds RNA and may function as a RNA chaperone to induce the RNA structural rearrangements taking place during virus replication. Modulates viral translation initiation by interacting with viral IRES and 40S ribosomal subunit. Affects various cell signaling pathways, host immunity and lipid metabolism. Prevents the establishment of cellular antiviral state by blocking the interferon-alpha/beta (IFN-alpha/beta) and IFN-gamma signaling pathways and by blocking the formation of phosphorylated STAT1 and promoting ubiquitin-mediated proteasome-dependent degradation of STAT1. Activates STAT3 leading to cellular transformation. Regulates the activity of cellular genes, including c-myc and c-fos. May repress the promoter of p53, and sequester CREB3 and SP110 isoform 3/Sp110b in the cytoplasm. Represses cell cycle negative regulating factor CDKN1A, thereby interrupting an important check point of normal cell cycle regulation. Targets transcription factors involved in the regulation of inflammatory responses and in the immune response: suppresses TNF-induced NF-kappa-B activation, and activates AP-1. Binds to dendritic cells (DCs) via C1QR1, resulting in down-regulation of T-lymphocytes proliferation. Alters lipid metabolism by interacting with hepatocellular proteins involved in lipid accumulation and storage. Induces up-regulation of FAS promoter activity, and thereby contributes to the increased triglyceride accumulation in hepatocytes (steatosis). In terms of biological role, forms a heterodimer with envelope glycoprotein E2, which mediates virus attachment to the host cell, virion internalization through clathrin-dependent endocytosis and fusion with host membrane. Fusion with the host cell is most likely mediated by both E1 and E2, through conformational rearrangements of the heterodimer required for fusion rather than a classical class II fusion mechanism. E1/E2 heterodimer binds host apolipoproteins such as APOB and ApoE thereby forming a lipo-viro-particle (LVP). APOE associated to the LVP allows the initial virus attachment to cell surface receptors such as the heparan sulfate proteoglycans (HSPGs), syndecan-1 (SDC1), syndecan-1 (SDC2), the low-density lipoprotein receptor (LDLR) and scavenger receptor class B type I (SCARB1). The cholesterol transfer activity of SCARB1 allows E2 exposure and binding of E2 to SCARB1 and the tetraspanin CD81. E1/E2 heterodimer binding on CD81 activates the epithelial growth factor receptor (EGFR) signaling pathway. Diffusion of the complex E1-E2-EGFR-SCARB1-CD81 to the cell lateral membrane allows further interaction with Claudin 1 (CLDN1) and occludin (OCLN) to finally trigger HCV entry. Its function is as follows. Forms a heterodimer with envelope glycoprotein E1, which mediates virus attachment to the host cell, virion internalization through clathrin-dependent endocytosis and fusion with host membrane. Fusion with the host cell is most likely mediated by both E1 and E2, through conformational rearrangements of the heterodimer required for fusion rather than a classical class II fusion mechanism. The interaction between envelope glycoprotein E2 and host apolipoprotein E/APOE allows the proper assembly, maturation and infectivity of the viral particles. This interaction is probably promoted via the up-regulation of cellular autophagy by the virus. E1/E2 heterodimer binds host apolipoproteins such as APOB and APOE thereby forming a lipo-viro-particle (LVP). APOE associated to the LVP allows the initial virus attachment to cell surface receptors such as the heparan sulfate proteoglycans (HSPGs), syndecan-1 (SDC1), syndecan-1 (SDC2), the low-density lipoprotein receptor (LDLR) and scavenger receptor class B type I (SCARB1). The cholesterol transfer activity of SCARB1 allows E2 exposure and binding of E2 to SCARB1 and the tetraspanin CD81. E1/E2 heterodimer binding on CD81 activates the epithelial growth factor receptor (EGFR) signaling pathway. Diffusion of the complex E1-E2-EGFR-SCARB1-CD81 to the cell lateral membrane allows further interaction with Claudin 1 (CLDN1) and occludin (OCLN) to finally trigger HCV entry. Inhibits host EIF2AK2/PKR activation, preventing the establishment of an antiviral state. Viral ligand for CD209/DC-SIGN and CLEC4M/DC-SIGNR, which are respectively found on dendritic cells (DCs), and on liver sinusoidal endothelial cells and macrophage-like cells of lymph node sinuses. These interactions allow the capture of circulating HCV particles by these cells and subsequent facilitated transmission to permissive cells such as hepatocytes and lymphocyte subpopulations. The interaction between E2 and host amino acid transporter complex formed by SLC3A2 and SLC7A5/LAT1 may facilitate viral entry into host cell. Functionally, ion channel protein that acts as a viroporin and plays an essential role in the assembly, envelopment and secretion of viral particles. Regulates the host cell secretory pathway, which induces the intracellular retention of viral glycoproteins and favors assembly of viral particles. Creates a pore in acidic organelles and releases Ca(2+) and H(+) in the cytoplasm of infected cells, leading to a productive viral infection. High levels of cytoplasmic Ca(2+) may trigger membrane trafficking and transport of viral ER-associated proteins to viroplasms, sites of viral genome replication. This ionic imbalance induces the assembly of the inflammasome complex, which triggers the maturation of pro-IL-1beta into IL-1beta through the action of caspase-1. Targets also host mitochondria and induces mitochondrial depolarization. In addition of its role as a viroporin, acts as a lipid raft adhesion factor. Cysteine protease required for the proteolytic auto-cleavage between the non-structural proteins NS2 and NS3. The N-terminus of NS3 is required for the function of NS2 protease (active region NS2-3). Promotes the initiation of viral particle assembly by mediating the interaction between structural and non-structural proteins. In terms of biological role, displays three enzymatic activities: serine protease with a chymotrypsin-like fold, NTPase and RNA helicase. NS3 serine protease, in association with NS4A, is responsible for the cleavages of NS3-NS4A, NS4A-NS4B, NS4B-NS5A and NS5A-NS5B. The NS3/NS4A complex prevents phosphorylation of host IRF3, thus preventing the establishment of dsRNA induced antiviral state. The NS3/NS4A complex induces host amino acid transporter component SLC3A2, thus contributing to HCV propagation. NS3 RNA helicase binds to RNA and unwinds both dsDNA and dsRNA in the 3' to 5' direction, and likely resolves RNA complicated stable secondary structures in the template strand. Binds a single ATP and catalyzes the unzipping of a single base pair of dsRNA. Inhibits host antiviral proteins TBK1 and IRF3 thereby preventing the establishment of an antiviral state. Cleaves host MAVS/CARDIF thereby preventing the establishment of an antiviral state. Cleaves host TICAM1/TRIF, thereby disrupting TLR3 signaling and preventing the establishment of an antiviral state. Its function is as follows. Peptide cofactor which forms a non-covalent complex with the N-terminal of NS3 serine protease. The NS3/NS4A complex prevents phosphorylation of host IRF3, thus preventing the establishment of dsRNA induced antiviral state. The NS3/NS4A complex induces host amino acid transporter component SLC3A2, thus contributing to HCV propagation. Functionally, induces a specific membrane alteration that serves as a scaffold for the virus replication complex. This membrane alteration gives rise to the so-called ER-derived membranous web that contains the replication complex. NS4B self-interaction contributes to its function in membranous web formation. Promotes host TRIF protein degradation in a CASP8-dependent manner thereby inhibiting host TLR3-mediated interferon signaling. Disrupts the interaction between STING and TBK1 contributing to the inhibition of interferon signaling. Phosphorylated protein that is indispensable for viral replication and assembly. Both hypo- and hyperphosphorylated states are required for the viral life cycle. The hyperphosphorylated form of NS5A is an inhibitor of viral replication. Involved in RNA-binding and especially in binding to the viral genome. Zinc is essential for RNA-binding. Participates in the viral particle production as a result of its interaction with the mature viral core protein. Its interaction with host VAPB may target the viral replication complex to vesicles. Down-regulates viral IRES translation initiation. Mediates interferon resistance, presumably by interacting with and inhibiting host EIF2AK2/PKR. Prevents BIN1-induced apoptosis. Acts as a transcriptional activator of some host genes important for viral replication when localized in the nucleus. Via the interaction with host PACSIN2, modulates lipid droplet formation in order to promote virion assembly. Modulates TNFRSF21/DR6 signaling pathway for viral propagation. In terms of biological role, RNA-dependent RNA polymerase that performs primer-template recognition and RNA synthesis during viral replication. Initiates RNA transcription/replication at a flavin adenine dinucleotide (FAD), resulting in a 5'- FAD cap on viral RNAs. In this way, recognition of viral 5' RNA by host pattern recognition receptors can be bypassed, thereby evading activation of antiviral pathways. This Hepatitis C virus genotype 5a (isolate SA13) (HCV) protein is Genome polyprotein.